The chain runs to 59 residues: Ribosome biogenesis protein Nop10 (59 aa).

Belongs to the NOP10 family.

In terms of biological role, involved in ribosome biogenesis; more specifically in 18S rRNA pseudouridylation and in cleavage of pre-rRNA. This chain is Ribosome biogenesis protein Nop10, found in Thermococcus sibiricus (strain DSM 12597 / MM 739).